The chain runs to 292 residues: Acetyl-coenzyme A carboxylase carboxyl transferase subunit beta (292 aa).

The CoA carboxyltransferase N-terminal domain maps to 29 to 292 (LWVKCSECGQ…HGVKELVQTN (264 aa)). Zn(2+) is bound by residues Cys-33, Cys-36, Cys-52, and Cys-55. Residues 33–55 (CSECGQVAYRKDLISNFNVCSNC) form a C4-type zinc finger.

Belongs to the AccD/PCCB family. As to quaternary structure, acetyl-CoA carboxylase is a heterohexamer composed of biotin carboxyl carrier protein (AccB), biotin carboxylase (AccC) and two subunits each of ACCase subunit alpha (AccA) and ACCase subunit beta (AccD). Zn(2+) serves as cofactor.

It is found in the cytoplasm. The catalysed reaction is N(6)-carboxybiotinyl-L-lysyl-[protein] + acetyl-CoA = N(6)-biotinyl-L-lysyl-[protein] + malonyl-CoA. Its pathway is lipid metabolism; malonyl-CoA biosynthesis; malonyl-CoA from acetyl-CoA: step 1/1. Component of the acetyl coenzyme A carboxylase (ACC) complex. Biotin carboxylase (BC) catalyzes the carboxylation of biotin on its carrier protein (BCCP) and then the CO(2) group is transferred by the transcarboxylase to acetyl-CoA to form malonyl-CoA. This Prochlorococcus marinus subsp. pastoris (strain CCMP1986 / NIES-2087 / MED4) protein is Acetyl-coenzyme A carboxylase carboxyl transferase subunit beta.